Here is a 208-residue protein sequence, read N- to C-terminus: Small ribosomal subunit protein uS4A (208 aa).

Residues 98–164 (TRLDNVVYTL…AKIQSAIQAV (67 aa)) enclose the S4 RNA-binding domain.

It belongs to the universal ribosomal protein uS4 family. Part of the 30S ribosomal subunit. Contacts protein S5. The interaction surface between S4 and S5 is involved in control of translational fidelity.

One of the primary rRNA binding proteins, it binds directly to 16S rRNA where it nucleates assembly of the body of the 30S subunit. In terms of biological role, with S5 and S12 plays an important role in translational accuracy. The chain is Small ribosomal subunit protein uS4A from Bdellovibrio bacteriovorus (strain ATCC 15356 / DSM 50701 / NCIMB 9529 / HD100).